We begin with the raw amino-acid sequence, 579 residues long: uncharacterized protein (579 aa).

This sequence belongs to the UbiD family.

This is an uncharacterized protein from Chlamydia trachomatis serovar D (strain ATCC VR-885 / DSM 19411 / UW-3/Cx).